The chain runs to 288 residues: Quinate/shikimate dehydrogenase (288 aa).

Residues Lys71 and Asp107 each contribute to the substrate site. NAD(+)-binding positions include 132–135 (AGGA), 155–158 (NRRD), Lys205, 232–235 (CVYN), and Gly255.

This sequence belongs to the shikimate dehydrogenase family. As to quaternary structure, homodimer.

It carries out the reaction L-quinate + NAD(+) = 3-dehydroquinate + NADH + H(+). The enzyme catalyses L-quinate + NADP(+) = 3-dehydroquinate + NADPH + H(+). The catalysed reaction is shikimate + NADP(+) = 3-dehydroshikimate + NADPH + H(+). It catalyses the reaction shikimate + NAD(+) = 3-dehydroshikimate + NADH + H(+). Its pathway is metabolic intermediate biosynthesis; chorismate biosynthesis; chorismate from D-erythrose 4-phosphate and phosphoenolpyruvate: step 4/7. Functionally, the actual biological function of YdiB remains unclear, nor is it known whether 3-dehydroshikimate or quinate represents the natural substrate. Catalyzes the reversible NAD-dependent reduction of both 3-dehydroshikimate (DHSA) and 3-dehydroquinate to yield shikimate (SA) and quinate, respectively. It can use both NAD or NADP for catalysis, however it has higher catalytic efficiency with NAD. In Escherichia coli O17:K52:H18 (strain UMN026 / ExPEC), this protein is Quinate/shikimate dehydrogenase.